A 148-amino-acid chain; its full sequence is Vascular endothelial growth factor homolog (148 aa).

Positions 1 to 25 (MKLTATLQVVVALLICMYNLPECVS) are cleaved as a signal peptide. Disulfide bonds link cysteine 46/cysteine 88, cysteine 77/cysteine 130, and cysteine 81/cysteine 132. N-linked (GlcNAc...) asparagine; by host glycosylation is present at asparagine 95.

Belongs to the PDGF/VEGF growth factor family. As to quaternary structure, homodimer; disulfide-linked.

It localises to the secreted. In terms of biological role, induces endothelial proliferation. The polypeptide is Vascular endothelial growth factor homolog (Orf virus (strain NZ7) (OV NZ-7)).